The sequence spans 122 residues: Large ribosomal subunit protein uL18 (122 aa).

This sequence belongs to the universal ribosomal protein uL18 family. As to quaternary structure, part of the 50S ribosomal subunit; part of the 5S rRNA/L5/L18/L25 subcomplex. Contacts the 5S and 23S rRNAs.

This is one of the proteins that bind and probably mediate the attachment of the 5S RNA into the large ribosomal subunit, where it forms part of the central protuberance. The protein is Large ribosomal subunit protein uL18 of Thermosipho africanus (strain TCF52B).